The chain runs to 175 residues: RNA pyrophosphohydrolase (175 aa).

Residues 6 to 149 form the Nudix hydrolase domain; sequence GYRPNVGIVI…KRDVYRRVMK (144 aa). Positions 38-59 match the Nudix box motif; that stretch reads GGINPGETAEQAMYRELFEEVG.

The protein belongs to the Nudix hydrolase family. RppH subfamily. The cofactor is a divalent metal cation.

Accelerates the degradation of transcripts by removing pyrophosphate from the 5'-end of triphosphorylated RNA, leading to a more labile monophosphorylated state that can stimulate subsequent ribonuclease cleavage. In Erwinia tasmaniensis (strain DSM 17950 / CFBP 7177 / CIP 109463 / NCPPB 4357 / Et1/99), this protein is RNA pyrophosphohydrolase.